A 400-amino-acid polypeptide reads, in one-letter code: Tyrosine--tRNA ligase 2 (400 aa).

A 'HIGH' region motif is present at residues 46–55 (PSAPDIHLGH). The short motif at 230-234 (KMSKS) is the 'KMSKS' region element. Residue Lys233 participates in ATP binding. The S4 RNA-binding domain occupies 339-399 (NNLIEAIVKI…GKKKIVKLLV (61 aa)).

Belongs to the class-I aminoacyl-tRNA synthetase family. TyrS type 2 subfamily. In terms of assembly, homodimer.

The protein resides in the cytoplasm. It carries out the reaction tRNA(Tyr) + L-tyrosine + ATP = L-tyrosyl-tRNA(Tyr) + AMP + diphosphate + H(+). Functionally, catalyzes the attachment of tyrosine to tRNA(Tyr) in a two-step reaction: tyrosine is first activated by ATP to form Tyr-AMP and then transferred to the acceptor end of tRNA(Tyr). The sequence is that of Tyrosine--tRNA ligase 2 from Clostridium acetobutylicum (strain ATCC 824 / DSM 792 / JCM 1419 / IAM 19013 / LMG 5710 / NBRC 13948 / NRRL B-527 / VKM B-1787 / 2291 / W).